A 286-amino-acid chain; its full sequence is Bifunctional protein FolD (286 aa).

NADP(+) is bound by residues 165–167 (GRS) and S190.

It belongs to the tetrahydrofolate dehydrogenase/cyclohydrolase family. As to quaternary structure, homodimer.

The enzyme catalyses (6R)-5,10-methylene-5,6,7,8-tetrahydrofolate + NADP(+) = (6R)-5,10-methenyltetrahydrofolate + NADPH. The catalysed reaction is (6R)-5,10-methenyltetrahydrofolate + H2O = (6R)-10-formyltetrahydrofolate + H(+). It participates in one-carbon metabolism; tetrahydrofolate interconversion. Functionally, catalyzes the oxidation of 5,10-methylenetetrahydrofolate to 5,10-methenyltetrahydrofolate and then the hydrolysis of 5,10-methenyltetrahydrofolate to 10-formyltetrahydrofolate. The polypeptide is Bifunctional protein FolD (Burkholderia lata (strain ATCC 17760 / DSM 23089 / LMG 22485 / NCIMB 9086 / R18194 / 383)).